The following is a 509-amino-acid chain: Steroid 17-alpha-hydroxylase/17,20 lyase (509 aa).

Residue cysteine 445 participates in heme binding.

It belongs to the cytochrome P450 family. Heme is required as a cofactor.

It is found in the membrane. The enzyme catalyses a C21-steroid + reduced [NADPH--hemoprotein reductase] + O2 = a 17alpha-hydroxy-C21-steroid + oxidized [NADPH--hemoprotein reductase] + H2O + H(+). The catalysed reaction is 17alpha-hydroxyprogesterone + reduced [NADPH--hemoprotein reductase] + O2 = androst-4-ene-3,17-dione + acetate + oxidized [NADPH--hemoprotein reductase] + H2O + 2 H(+). It catalyses the reaction 17alpha-hydroxypregnenolone + reduced [NADPH--hemoprotein reductase] + O2 = 3beta-hydroxyandrost-5-en-17-one + acetate + oxidized [NADPH--hemoprotein reductase] + H2O + 2 H(+). It functions in the pathway lipid metabolism; steroid biosynthesis. Functionally, conversion of pregnenolone and progesterone to their 17-alpha-hydroxylated products and subsequently to dehydroepiandrosterone (DHEA) and androstenedione. Catalyzes both the 17-alpha-hydroxylation and the 17,20-lyase reaction. The protein is Steroid 17-alpha-hydroxylase/17,20 lyase (CYP17A1) of Squalus acanthias (Spiny dogfish).